Reading from the N-terminus, the 293-residue chain is Nucleotide-binding protein Csac_1160 (293 aa).

11–18 (GMSGAGKS) serves as a coordination point for ATP. A GTP-binding site is contributed by 62 to 65 (DIRG).

Belongs to the RapZ-like family.

Displays ATPase and GTPase activities. The polypeptide is Nucleotide-binding protein Csac_1160 (Caldicellulosiruptor saccharolyticus (strain ATCC 43494 / DSM 8903 / Tp8T 6331)).